A 619-amino-acid polypeptide reads, in one-letter code: Chaperone protein HscA homolog (619 aa).

This sequence belongs to the heat shock protein 70 family.

Functionally, chaperone involved in the maturation of iron-sulfur cluster-containing proteins. Has a low intrinsic ATPase activity which is markedly stimulated by HscB. This is Chaperone protein HscA homolog from Laribacter hongkongensis (strain HLHK9).